Here is a 209-residue protein sequence, read N- to C-terminus: Claudin-4 (209 aa).

At 1–9 (MASMGLQVM) the chain is on the cytoplasmic side. Residues 1–103 (MASMGLQVMG…GVLLSVVGGK (103 aa)) are interaction with EPHA2. A helical membrane pass occupies residues 10–30 (GIALAVLGWLGAILSCALPMW). The Extracellular portion of the chain corresponds to 31–81 (RVTAFIGSNIVTSQTIWEGLWMNCVVQSTGQMQCKVYDSLLALPQDLQAAR). Residues Cys-54 and Cys-64 are joined by a disulfide bond. Residues 82 to 102 (ALIVICIILAVFGVLLSVVGG) form a helical membrane-spanning segment. The Cytoplasmic segment spans residues 103 to 117 (KCTNCVDDESSKAKI). The chain crosses the membrane as a helical span at residues 118–138 (MIVAGVVFLLAGLLVMVPVSW). The Extracellular segment spans residues 139–160 (TANNVIRDFYNPLVASGQKREM). The chain crosses the membrane as a helical span at residues 161-181 (GASLYVGWAAAGLLILGGALL). The Cytoplasmic segment spans residues 182–209 (CFNCPPRNDKPYSAKYSAARSAPASNYV). The residue at position 208 (Tyr-208) is a Phosphotyrosine; by EPHA2. Residues 208–209 (YV) are interactions with TJP1, TJP2 and TJP3.

It belongs to the claudin family. As to quaternary structure, interacts with EPHA2; phosphorylates CLDN4 and may regulate tight junctions. Directly interacts with TJP1/ZO-1, TJP2/ZO-2 and TJP3/ZO-3. Interacts with CLDN1. Interacts with CLDN8. Post-translationally, phosphorylated. Phosphorylation by EPHA2 is stimulated by EFNA1 and alters interaction with TJP1.

It is found in the cell junction. It localises to the tight junction. The protein resides in the cell membrane. Channel-forming tight junction protein that mediates paracellular chloride transport in the kidney. Plays a critical role in the paracellular reabsorption of filtered chloride in the kidney collecting ducts. Claudins play a major role in tight junction-specific obliteration of the intercellular space, through calcium-independent cell-adhesion activity. The chain is Claudin-4 (CLDN4) from Bos taurus (Bovine).